The primary structure comprises 217 residues: tRNA (guanine-N(7)-)-methyltransferase (217 aa).

S-adenosyl-L-methionine-binding residues include E43, D68, N101, and N123. Residue K127 coordinates substrate. The tract at residues 129-134 (RHNKRR) is interaction with RNA. Residues D159 and 196–199 (TEYE) contribute to the substrate site.

It belongs to the class I-like SAM-binding methyltransferase superfamily. TrmB family.

It catalyses the reaction guanosine(46) in tRNA + S-adenosyl-L-methionine = N(7)-methylguanosine(46) in tRNA + S-adenosyl-L-homocysteine. The protein operates within tRNA modification; N(7)-methylguanine-tRNA biosynthesis. Functionally, catalyzes the formation of N(7)-methylguanine at position 46 (m7G46) in tRNA. This is tRNA (guanine-N(7)-)-methyltransferase from Clostridium botulinum (strain 657 / Type Ba4).